Consider the following 325-residue polypeptide: Glutarate 2-hydroxylase (325 aa).

Positions 160, 162, and 292 each coordinate Fe cation.

This sequence belongs to the glutarate hydroxylase family. As to quaternary structure, homotetramer. The cofactor is Fe(2+).

The catalysed reaction is glutarate + 2-oxoglutarate + O2 = (S)-2-hydroxyglutarate + succinate + CO2. The protein operates within amino-acid degradation. Its function is as follows. Acts as an alpha-ketoglutarate-dependent dioxygenase catalyzing hydroxylation of glutarate (GA) to L-2-hydroxyglutarate (L2HG). Functions in a L-lysine degradation pathway that proceeds via cadaverine, glutarate and L-2-hydroxyglutarate. This chain is Glutarate 2-hydroxylase, found in Escherichia coli (strain UTI89 / UPEC).